We begin with the raw amino-acid sequence, 394 residues long: Choline/ethanolamine kinase (394 aa).

Positions 1-42 are disordered; sequence MAADGTGVVGGGAVGGGLPKDGLQDAKCPEPIPNRRRASSLS. Alanine 2 carries the N-acetylalanine modification. Positions 7–19 are enriched in gly residues; it reads GVVGGGAVGGGLP. ATP contacts are provided by residues 75-81, arginine 104, 146-152, glutamine 244, and aspartate 264; these read SGGLSNL and QYLPSRP. Residue 77–79 coordinates substrate; sequence GLS.

This sequence belongs to the choline/ethanolamine kinase family. As to quaternary structure, homodimer, and heterodimer with CHKA. Expressed ubiquitously with the highest level in testis.

It catalyses the reaction choline + ATP = phosphocholine + ADP + H(+). It carries out the reaction ethanolamine + ATP = phosphoethanolamine + ADP + H(+). The protein operates within phospholipid metabolism; phosphatidylethanolamine biosynthesis; phosphatidylethanolamine from ethanolamine: step 1/3. Functionally, has a key role in phospholipid metabolism, and catalyzes the first step of phosphatidylethanolamine and phosphatidylcholine biosynthesis. This is Choline/ethanolamine kinase (Chkb) from Mus musculus (Mouse).